Here is a 568-residue protein sequence, read N- to C-terminus: Periplasmic trehalase (568 aa).

Residues 1 to 38 form the signal peptide; it reads MPHAPARSGDAMSAAAPPCCTSLLGLSLSMFVAPCALA. Substrate contacts are provided by residues R169, 176–177, N213, 222–224, 294–296, and G327; these read WD, RSQ, and RPE. Residues D329 and E511 each act as proton donor/acceptor in the active site. E526 is a substrate binding site.

It belongs to the glycosyl hydrolase 37 family.

The protein resides in the periplasm. It catalyses the reaction alpha,alpha-trehalose + H2O = alpha-D-glucose + beta-D-glucose. Provides the cells with the ability to utilize trehalose at high osmolarity by splitting it into glucose molecules that can subsequently be taken up by the phosphotransferase-mediated uptake system. This is Periplasmic trehalase from Xanthomonas campestris pv. campestris (strain 8004).